A 140-amino-acid chain; its full sequence is Anti-sigma F factor (140 aa).

It belongs to the anti-sigma-factor family.

It catalyses the reaction L-seryl-[protein] + ATP = O-phospho-L-seryl-[protein] + ADP + H(+). The catalysed reaction is L-threonyl-[protein] + ATP = O-phospho-L-threonyl-[protein] + ADP + H(+). Functionally, binds to sigma F and blocks its ability to form an RNA polymerase holoenzyme (E-sigma F). Phosphorylates SpoIIAA on a serine residue. This phosphorylation may enable SpoIIAA to act as an anti-anti-sigma factor that counteracts SpoIIAB and thus releases sigma F from inhibition. The sequence is that of Anti-sigma F factor from Clostridium perfringens (strain ATCC 13124 / DSM 756 / JCM 1290 / NCIMB 6125 / NCTC 8237 / Type A).